A 193-amino-acid chain; its full sequence is Putative kinase protein 029R (193 aa).

9–17 contributes to the ATP binding site; the sequence is GIIGSGKSS. Substrate is bound by residues glutamate 31, tyrosine 43, and glutamine 54. Catalysis depends on glutamate 78, which acts as the Proton acceptor. Residues arginine 79 and glutamate 142 each contribute to the substrate site.

The protein belongs to the DCK/DGK family.

The sequence is that of Putative kinase protein 029R from Aedes vexans (Inland floodwater mosquito).